A 357-amino-acid chain; its full sequence is Cholinesterase 1 (357 aa).

Residue Ser112 is the Acyl-ester intermediate of the active site. Cys166 and Cys179 form a disulfide bridge. Catalysis depends on charge relay system residues Glu244 and His357.

This sequence belongs to the type-B carboxylesterase/lipase family.

The catalysed reaction is an acylcholine + H2O = a carboxylate + choline + H(+). In Branchiostoma lanceolatum (Common lancelet), this protein is Cholinesterase 1 (CHE1).